Consider the following 322-residue polypeptide: Elongation factor P--(R)-beta-lysine ligase (322 aa).

75–77 (SPE) provides a ligand contact to substrate. 99 to 101 (RNE) is an ATP binding site. Residue Tyr-117 coordinates substrate. 241-242 (EL) contributes to the ATP binding site. Residue Glu-248 coordinates substrate. Gly-297 contacts ATP.

The protein belongs to the class-II aminoacyl-tRNA synthetase family. EpmA subfamily. In terms of assembly, homodimer.

The enzyme catalyses D-beta-lysine + L-lysyl-[protein] + ATP = N(6)-((3R)-3,6-diaminohexanoyl)-L-lysyl-[protein] + AMP + diphosphate + H(+). With EpmB is involved in the beta-lysylation step of the post-translational modification of translation elongation factor P (EF-P). Catalyzes the ATP-dependent activation of (R)-beta-lysine produced by EpmB, forming a lysyl-adenylate, from which the beta-lysyl moiety is then transferred to the epsilon-amino group of a conserved specific lysine residue in EF-P. This is Elongation factor P--(R)-beta-lysine ligase from Avibacterium paragallinarum (Haemophilus gallinarum).